The primary structure comprises 335 residues: Vitamin B12 import system permease protein BtuC (335 aa).

Transmembrane regions (helical) follow at residues 25 to 45 (LVVM…VWIW), 67 to 87 (MAVI…QALF), 94 to 113 (PGLL…AVLL), 117 to 139 (LLPI…SILL), 153 to 173 (LLVG…AVYF), 243 to 263 (VLAI…ISFI), 281 to 301 (RLLA…DVVA), and 309 to 329 (ELPI…WLLI).

It belongs to the binding-protein-dependent transport system permease family. FecCD subfamily. The complex is composed of two ATP-binding proteins (BtuD), two transmembrane proteins (BtuC) and a solute-binding protein (BtuF).

Its subcellular location is the cell inner membrane. Its function is as follows. Part of the ABC transporter complex BtuCDF involved in vitamin B12 import. Involved in the translocation of the substrate across the membrane. This Yersinia pseudotuberculosis serotype O:1b (strain IP 31758) protein is Vitamin B12 import system permease protein BtuC.